We begin with the raw amino-acid sequence, 539 residues long: Probable glycerol kinase (539 aa).

Thr12 is a substrate binding site. Residue Arg16 participates in ATP binding. Substrate contacts are provided by Arg86, Tyr168, and Asp285. Residues Thr307, Gly352, and 453–457 contribute to the ATP site; that span reads GMAKN.

The protein belongs to the FGGY kinase family.

The catalysed reaction is glycerol + ATP = sn-glycerol 3-phosphate + ADP + H(+). It participates in polyol metabolism; glycerol degradation via glycerol kinase pathway; sn-glycerol 3-phosphate from glycerol: step 1/1. This Dictyostelium discoideum (Social amoeba) protein is Probable glycerol kinase (gk).